A 71-amino-acid polypeptide reads, in one-letter code: Small ribosomal subunit protein bS21 (71 aa).

The disordered stretch occupies residues 37–71 (HYEKPTQERKRKAAAAVKRHMKRLSREQARRRRLY). Residues 45–71 (RKRKAAAAVKRHMKRLSREQARRRRLY) show a composition bias toward basic residues.

It belongs to the bacterial ribosomal protein bS21 family.

The protein is Small ribosomal subunit protein bS21 of Alkalilimnicola ehrlichii (strain ATCC BAA-1101 / DSM 17681 / MLHE-1).